A 527-amino-acid polypeptide reads, in one-letter code: Cytochrome b5 reductase 4 (527 aa).

The disordered stretch occupies residues 1 to 24; it reads MLNVPSQAFPAAGSQQRVAPAGQS. Residues 56–132 enclose the Cytochrome b5 heme-binding domain; that stretch reads LIEVTEDELK…LKECLVGRMA (77 aa). Residues His-91 and His-114 each coordinate heme. The interval 138–171 is disordered; it reads ALQAHTEKTESTHLNGLSAPPSLRPEPLSAPLPA. Residues 173–264 enclose the CS domain; sequence DHRPRYDWFQ…SVKEKWTQLG (92 aa). The FAD-binding FR-type domain occupies 281–392; the sequence is LFYRECVLLS…GGPEGSFTLR (112 aa). FAD contacts are provided by residues 372–387 and 399–431; these read ANLP…GPEG and HLYM…KMKL.

Belongs to the flavoprotein pyridine nucleotide cytochrome reductase family. Requires FAD as cofactor.

It is found in the endoplasmic reticulum. It carries out the reaction 2 Fe(III)-[cytochrome b5] + NADH = 2 Fe(II)-[cytochrome b5] + NAD(+) + H(+). NADH-cytochrome b5 reductase involved in endoplasmic reticulum stress response pathway. The sequence is that of Cytochrome b5 reductase 4 (cyb5r4) from Danio rerio (Zebrafish).